Here is a 483-residue protein sequence, read N- to C-terminus: Regulatory protein ViaA (483 aa).

The protein belongs to the ViaA family. In terms of assembly, homodimer. Interacts with RavA.

The protein localises to the cytoplasm. Its function is as follows. Component of the RavA-ViaA chaperone complex, which may act on the membrane to optimize the function of some of the respiratory chains. ViaA stimulates the ATPase activity of RavA. The protein is Regulatory protein ViaA of Shigella sonnei (strain Ss046).